Consider the following 210-residue polypeptide: Large ribosomal subunit protein uL4 (210 aa).

The tract at residues 46–96 (QGNASTKTRAEVRGGGRKPWRQKGTGRARAGSNRSPLWRGGGVIFGPKPRD) is disordered. A compositionally biased stretch (basic residues) spans 60–71 (GGRKPWRQKGTG).

Belongs to the universal ribosomal protein uL4 family. In terms of assembly, part of the 50S ribosomal subunit.

Its function is as follows. One of the primary rRNA binding proteins, this protein initially binds near the 5'-end of the 23S rRNA. It is important during the early stages of 50S assembly. It makes multiple contacts with different domains of the 23S rRNA in the assembled 50S subunit and ribosome. Functionally, forms part of the polypeptide exit tunnel. The protein is Large ribosomal subunit protein uL4 of Gloeothece citriformis (strain PCC 7424) (Cyanothece sp. (strain PCC 7424)).